Here is a 177-residue protein sequence, read N- to C-terminus: Large ribosomal subunit protein uL6 (177 aa).

This sequence belongs to the universal ribosomal protein uL6 family. In terms of assembly, part of the 50S ribosomal subunit.

Functionally, this protein binds to the 23S rRNA, and is important in its secondary structure. It is located near the subunit interface in the base of the L7/L12 stalk, and near the tRNA binding site of the peptidyltransferase center. The polypeptide is Large ribosomal subunit protein uL6 (Ruegeria pomeroyi (strain ATCC 700808 / DSM 15171 / DSS-3) (Silicibacter pomeroyi)).